Here is a 275-residue protein sequence, read N- to C-terminus: Tropinone reductase-like 2 (275 aa).

17-41 (IITGGASGIGACTAELFHENGAKVV) is an NAD(+) binding site. S150 is a substrate binding site. Catalysis depends on Y163, which acts as the Proton acceptor.

The protein belongs to the short-chain dehydrogenases/reductases (SDR) family.

Functionally, has no tropinone reductase activity. The chain is Tropinone reductase-like 2 from Erythroxylum coca (Coca plant).